The chain runs to 292 residues: 4-hydroxy-tetrahydrodipicolinate synthase (292 aa).

Thr45 provides a ligand contact to pyruvate. Catalysis depends on Tyr133, which acts as the Proton donor/acceptor. Catalysis depends on Lys161, which acts as the Schiff-base intermediate with substrate. Residue Ile203 coordinates pyruvate.

It belongs to the DapA family. Homotetramer; dimer of dimers.

It localises to the cytoplasm. The catalysed reaction is L-aspartate 4-semialdehyde + pyruvate = (2S,4S)-4-hydroxy-2,3,4,5-tetrahydrodipicolinate + H2O + H(+). The protein operates within amino-acid biosynthesis; L-lysine biosynthesis via DAP pathway; (S)-tetrahydrodipicolinate from L-aspartate: step 3/4. Its function is as follows. Catalyzes the condensation of (S)-aspartate-beta-semialdehyde [(S)-ASA] and pyruvate to 4-hydroxy-tetrahydrodipicolinate (HTPA). The chain is 4-hydroxy-tetrahydrodipicolinate synthase from Nitrosomonas europaea (strain ATCC 19718 / CIP 103999 / KCTC 2705 / NBRC 14298).